We begin with the raw amino-acid sequence, 179 residues long: ATP synthase subunit delta (179 aa).

The protein belongs to the ATPase delta chain family. As to quaternary structure, F-type ATPases have 2 components, F(1) - the catalytic core - and F(0) - the membrane proton channel. F(1) has five subunits: alpha(3), beta(3), gamma(1), delta(1), epsilon(1). F(0) has three main subunits: a(1), b(2) and c(10-14). The alpha and beta chains form an alternating ring which encloses part of the gamma chain. F(1) is attached to F(0) by a central stalk formed by the gamma and epsilon chains, while a peripheral stalk is formed by the delta and b chains.

The protein resides in the cell membrane. Functionally, f(1)F(0) ATP synthase produces ATP from ADP in the presence of a proton or sodium gradient. F-type ATPases consist of two structural domains, F(1) containing the extramembraneous catalytic core and F(0) containing the membrane proton channel, linked together by a central stalk and a peripheral stalk. During catalysis, ATP synthesis in the catalytic domain of F(1) is coupled via a rotary mechanism of the central stalk subunits to proton translocation. This protein is part of the stalk that links CF(0) to CF(1). It either transmits conformational changes from CF(0) to CF(1) or is implicated in proton conduction. This chain is ATP synthase subunit delta, found in Clostridium botulinum (strain Kyoto / Type A2).